The primary structure comprises 894 residues: Protein SEY1 (894 aa).

The tract at residues 1–64 (MGLDVDSVPI…PRALEPAQVT (64 aa)) is disordered. Residues 1–768 (MGLDVDSVPI…KRGTVSSMSQ (768 aa)) are Cytoplasmic-facing. Low complexity predominate over residues 9 to 24 (PIAEAAAPSSMAATEP). The segment covering 40–53 (APMNTDSSRETMPT) has biased composition (polar residues). Residues 137 to 359 (GFGYDICAVL…DESYVFKTEY (223 aa)) enclose the GB1/RHD3-type G domain. 147–154 (GSQSTGKS) serves as a coordination point for GTP. Residues 536–559 (KVDDERAQLLDELHTLARTLRANE) are a coiled coil. A helical membrane pass occupies residues 769-789 (VPIWMYGVLVVLGWNEAMAVL). The Lumenal segment spans residues 790-792 (RNP). The chain crosses the membrane as a helical span at residues 793-813 (VYFTLLCMVLATAYVIWRLNL). Over 814–894 (GTPVLALASG…DSHPRLPASF (81 aa)) the chain is Cytoplasmic. A disordered region spans residues 841 to 894 (DGTPPSANRAREYRVPSGSTAHVSEKTPHRPLTTSGAAEADTVEDSHPRLPASF).

It belongs to the TRAFAC class dynamin-like GTPase superfamily. GB1/RHD3 GTPase family. RHD3 subfamily.

The protein resides in the endoplasmic reticulum membrane. Cooperates with the reticulon proteins and tubule-shaping DP1 family proteins to generate and maintain the structure of the tubular endoplasmic reticulum network. Has GTPase activity, which is required for its function in ER organization. The polypeptide is Protein SEY1 (Malassezia globosa (strain ATCC MYA-4612 / CBS 7966) (Dandruff-associated fungus)).